A 33-amino-acid polypeptide reads, in one-letter code: Kappa-sparatoxin-Hv1a (33 aa).

Cystine bridges form between cysteine 2–cysteine 17, cysteine 9–cysteine 22, and cysteine 16–cysteine 27. A Tryptophan amide modification is found at tryptophan 33.

Expressed by the venom gland.

It localises to the secreted. Functionally, blocks transient outward voltage-gated potassium channels in rat ventricular myocytes (thus prolonging action-potential duration) and rat Kv4.2/KCNA4 channels expressed in Xenopus oocytes. Is also a weak blocker of calcium channels in rat cerebellar granule cells. The protein is Kappa-sparatoxin-Hv1a of Heteropoda venatoria (Brown huntsman spider).